Here is a 339-residue protein sequence, read N- to C-terminus: Probable scoulerine-9-O-methyltransferase OMT3B (339 aa).

Residue M161 participates in S-adenosyl-L-methionine binding. A substrate-binding site is contributed by D164. Residues T165, G191, D214, 228 to 229 (DV), and K242 each bind S-adenosyl-L-methionine. 243 to 247 (SILHE) is a substrate binding site. H246 (proton acceptor) is an active-site residue.

The protein belongs to the class I-like SAM-binding methyltransferase superfamily. Cation-independent O-methyltransferase family. COMT subfamily.

It carries out the reaction (S)-scoulerine + S-adenosyl-L-methionine = (S)-tetrahydrocolumbamine + S-adenosyl-L-homocysteine + H(+). Its pathway is alkaloid biosynthesis. Its function is as follows. Methyltransferase involved in the biosynthesis of the benzylisoquinoline alkaloid noscapine. Catalyzes the conversion of (S)-scoulerine to (S)-tetrahydrocolumbamine. The polypeptide is Probable scoulerine-9-O-methyltransferase OMT3B (Papaver somniferum (Opium poppy)).